The chain runs to 349 residues: Phosphorylcholine phosphatase (349 aa).

An N-terminal signal peptide occupies residues 1–22 (MTFAKGILAALALAAAVGQASA). Residue D53 is the Nucleophile of the active site. Positions 53 and 55 each coordinate Mg(2+). D55 functions as the Proton donor in the catalytic mechanism. C109 and C116 are joined by a disulfide. D284 lines the Mg(2+) pocket.

The protein belongs to the HAD-like hydrolase superfamily. As to quaternary structure, monomer. Homodimer. Homotetramer. The cofactor is Mg(2+).

The protein localises to the periplasm. It carries out the reaction phosphocholine + H2O = choline + phosphate. It catalyses the reaction phosphoethanolamine + H2O = ethanolamine + phosphate. With respect to regulation, activity is inhibited by high concentrations of phosphorylcholine, phosphorylethanolamine, choline or betaine. Displays different properties depending on the substrate utilized, the pH conditions as well as the presence or absence of metal ions. At pH 5, activity is inhibited by Al(3+) ions. At pH 7.4, the enzyme cannot catalyze the hydrolysis of pNPP, phosphorylethanolamine is a poor substrate in either the presence or absence of divalent cations, and activity measured with phosphorylcholine is independent of divalent cations or is not inhibited by Al(3+) ions. Mg(2+) produces identical activation at pH 5.0 and 7.4, but Zn(2+) is an activator at pH 5.0 and becomes an inhibitor at pH 7.4. This inhibition at pH 7.4 may be due to a transition from octahedral to tetrahedral coordination geometry, which is produced by hydrolysis of the Zn-hexacoordinated complex. In terms of biological role, catalyzes the hydrolysis of phosphorylcholine (PCho) to produce choline and inorganic phosphate. Can also hydrolyze phosphorylethanolamine and the nonphysiological substrate p-nitrophenylphosphate (pNPP). Shows higher affinity and catalytic efficiency with phosphorylcholine as substrate. Functionally, is probably involved in virulence. The bacteria may break down various host compounds or host cell membranes through the coordinated action of phospholipase C and phosphocholine phosphatase. The final consequence of the action of these enzymes is an increase of the free choline concentration, which may promote the pathogenicity of P.aeruginosa. This is Phosphorylcholine phosphatase from Pseudomonas aeruginosa (strain ATCC 15692 / DSM 22644 / CIP 104116 / JCM 14847 / LMG 12228 / 1C / PRS 101 / PAO1).